The primary structure comprises 573 residues: Arylsulfatase I (573 aa).

The signal sequence occupies residues 1–23 (MHALTGLSLVSLLSFGYLSWDWA). Ca(2+) is bound by residues Asp-56, Asp-57, and Cys-94. Cys-94 acts as the Nucleophile in catalysis. Cys-94 is subject to 3-oxoalanine (Cys). Lys-148 is a binding site for substrate. His-150 is an active-site residue. Residue His-240 participates in substrate binding. 2 N-linked (GlcNAc...) asparagine glycosylation sites follow: Asn-277 and Asn-289. The Ca(2+) site is built by Asp-298 and Asn-299. Lys-316 is a substrate binding site. N-linked (GlcNAc...) asparagine glycosylation is found at Asn-467 and Asn-497. The disordered stretch occupies residues 516-550 (FNGGAWGPWASDEEEEEEEEEAGRARSFSRGRRKK). The segment covering 526–536 (SDEEEEEEEEE) has biased composition (acidic residues).

This sequence belongs to the sulfatase family. Ca(2+) is required as a cofactor. The oxidation of Cys-94 residue to 3-oxoalanine (also known as C(alpha)-formylglycine) by SUMF1/Sulfatase-modifying factor 1, seems critical for catalytic activity.

The protein localises to the secreted. Its subcellular location is the endoplasmic reticulum. Its function is as follows. Displays arylsulfatase activity at neutral pH, when co-expressed with SUMF1; arylsulfatase activity is measured in the secretion medium of retinal cell line, but no activity is recorded when measured in cell extracts. The sequence is that of Arylsulfatase I (ARSI) from Canis lupus familiaris (Dog).